The chain runs to 470 residues: MKSAVENLEPTRVKLTVEVAFDELKASLDHAYQHIAQQVNVPGFRKGKVPPRVIDQRVGRAAVVEHAVNDALPDFYRQAVTESELKVLGQPEVEVTGVPDTTSGELTFTAEVDVRPDFTLPALADLELEVDDVAVTDDDVAERLDLLRQRYGTLTGVDRAAETGDYVVIDMTATIDGEEVDTVSGVSYEIGSGNMLDGLDEALVGLAADETATFSAPLAGGDRAGEAADVSVTVTAVKVQELPEADDDFAQLASEFDTLEELQADLRTQISDAKVNNQAVQARDRLLEKLVEATDFPLPQGVIEAEIHRHLESEGRLEDDEHREEVREEATQALRRQLVLDVLADQVSVQVNQNELVEFLLRTAQQYRVDPNEFITNADKTGQIPSFVAELARNKSLAVALRDVRVVDASGNAVDLTSFIGSEETDAEDAAEGVESVEVDLSAAAEDDAEETSDEPAAEDTATEDEAAKA.

The PPIase FKBP-type domain occupies 164-243; the sequence is GDYVVIDMTA…VTAVKVQELP (80 aa). Composition is skewed to acidic residues over residues 424–438 and 445–470; these read ETDA…ESVE and AEDD…AAKA. The tract at residues 424–470 is disordered; sequence ETDAEDAAEGVESVEVDLSAAAEDDAEETSDEPAAEDTATEDEAAKA.

Belongs to the FKBP-type PPIase family. Tig subfamily.

It localises to the cytoplasm. The catalysed reaction is [protein]-peptidylproline (omega=180) = [protein]-peptidylproline (omega=0). Functionally, involved in protein export. Acts as a chaperone by maintaining the newly synthesized protein in an open conformation. Functions as a peptidyl-prolyl cis-trans isomerase. This is Trigger factor from Beutenbergia cavernae (strain ATCC BAA-8 / DSM 12333 / CCUG 43141 / JCM 11478 / NBRC 16432 / NCIMB 13614 / HKI 0122).